The primary structure comprises 347 residues: Protein FAM50 homolog (347 aa).

Over residues 77–113 the composition is skewed to basic and acidic residues; it reads EDIVREREKKLAQKKEEKDREKLKALEAKQAEKDRQR. The segment at 77 to 142 is disordered; sequence EDIVREREKK…EDEEEPLEIK (66 aa). Residues 123–138 show a composition bias toward acidic residues; the sequence is PEEDEESFDDEDEEEP.

This sequence belongs to the FAM50 family.

The polypeptide is Protein FAM50 homolog (Aedes aegypti (Yellowfever mosquito)).